Here is a 162-residue protein sequence, read N- to C-terminus: MKTMDAQEILRCYAQGQRDFSHINLVRVCLSNASLIGAQLIFVDLGGANLTRAQLDSATLKNANLALANMTEVCLIYADLSNADLSGANLVGADLTNADLSGAKLGGADLRKANLSEASLRGADLRGVNLIEANLTNTDFSEADLTGAYISDGAVINVVNLS.

3 Pentapeptide repeat domains span residues 33–72, 73–112, and 113–152; these read ASLI…NMTE, VCLI…DLRK, and ANLS…YISD.

This is an uncharacterized protein from Synechocystis sp. (strain ATCC 27184 / PCC 6803 / Kazusa).